The chain runs to 273 residues: Dermonecrotic toxin LhSicTox-alphaIA2aviii (273 aa).

Histidine 5 is an active-site residue. Residues glutamate 25 and aspartate 27 each contribute to the Mg(2+) site. Histidine 41 serves as the catalytic Nucleophile. Intrachain disulfides connect cysteine 45–cysteine 51 and cysteine 47–cysteine 190. Aspartate 85 serves as a coordination point for Mg(2+).

Belongs to the arthropod phospholipase D family. Class II subfamily. Requires Mg(2+) as cofactor. As to expression, expressed by the venom gland.

Its subcellular location is the secreted. The enzyme catalyses an N-(acyl)-sphingosylphosphocholine = an N-(acyl)-sphingosyl-1,3-cyclic phosphate + choline. It catalyses the reaction an N-(acyl)-sphingosylphosphoethanolamine = an N-(acyl)-sphingosyl-1,3-cyclic phosphate + ethanolamine. The catalysed reaction is a 1-acyl-sn-glycero-3-phosphocholine = a 1-acyl-sn-glycero-2,3-cyclic phosphate + choline. It carries out the reaction a 1-acyl-sn-glycero-3-phosphoethanolamine = a 1-acyl-sn-glycero-2,3-cyclic phosphate + ethanolamine. Dermonecrotic toxins cleave the phosphodiester linkage between the phosphate and headgroup of certain phospholipids (sphingolipid and lysolipid substrates), forming an alcohol (often choline) and a cyclic phosphate. This toxin acts on sphingomyelin (SM). It may also act on ceramide phosphoethanolamine (CPE), lysophosphatidylcholine (LPC) and lysophosphatidylethanolamine (LPE), but not on lysophosphatidylserine (LPS), and lysophosphatidylglycerol (LPG). It acts by transphosphatidylation, releasing exclusively cyclic phosphate products as second products. Induces dermonecrosis, hemolysis, increased vascular permeability, edema, inflammatory response, and platelet aggregation. The protein is Dermonecrotic toxin LhSicTox-alphaIA2aviii of Loxosceles hirsuta (Recluse spider).